Reading from the N-terminus, the 185-residue chain is Ribosome hibernation promotion factor (185 aa).

Residues 1-125 (MIKFNIRGEN…PLDTTDEVAE (125 aa)) form a probably still associates with ribosome region. Residues 126–185 (DHVDIVRTKHVALKPMDAEEAVLQMDMLGHDFYVFTDADSNGTHVVYRRTDGRYGLIETE) form a required but not sufficient to restore ribosome dimerization, in vitro will replace E.coli RMF in ribosome dimerization region.

The protein belongs to the HPF/YfiA ribosome-associated protein family. Long HPF subfamily. Interacts with 100S ribosomes in stationary phase; alters the relative position of the 30S and 50S subunits.

The protein resides in the cytoplasm. Its function is as follows. Required for dimerization of active 70S ribosomes into 100S ribosomes in stationary phase; 100S ribosomes are translationally inactive and sometimes present during exponential growth. Able to dimerize E.coli 70S ribosomes in vitro. The polypeptide is Ribosome hibernation promotion factor (Lactococcus lactis subsp. cremoris (strain MG1363)).